A 262-amino-acid polypeptide reads, in one-letter code: Putative glycyl-radical enzyme activating enzyme HI_0520 (262 aa).

A Radical SAM core domain is found at 20 to 262 (VEGQGNRSSI…CGINKILTIL (243 aa)). Residues C34, C38, and C41 each contribute to the [4Fe-4S] cluster site. Residues 40-42 (YCH), G81, and 130-132 (DLK) contribute to the S-adenosyl-L-methionine site.

The protein belongs to the organic radical-activating enzymes family. Requires [4Fe-4S] cluster as cofactor.

The catalysed reaction is glycyl-[protein] + reduced [flavodoxin] + S-adenosyl-L-methionine = glycin-2-yl radical-[protein] + semiquinone [flavodoxin] + 5'-deoxyadenosine + L-methionine + H(+). This Haemophilus influenzae (strain ATCC 51907 / DSM 11121 / KW20 / Rd) protein is Putative glycyl-radical enzyme activating enzyme HI_0520.